The following is a 191-amino-acid chain: Pre-rRNA-processing protein TSR2 homolog (191 aa).

The tract at residues 149 to 172 (TATNDGAATDGVCPQPEPSDPDAQ) is disordered.

The protein belongs to the TSR2 family.

In terms of biological role, may be involved in 20S pre-rRNA processing. The chain is Pre-rRNA-processing protein TSR2 homolog (TSR2) from Homo sapiens (Human).